The primary structure comprises 1306 residues: Receptor-type tyrosine-protein phosphatase C (1306 aa).

An N-terminal signal peptide occupies residues 1-25 (MTMYLWLKLLAFGFAFLDTEVFVTG). The Extracellular segment spans residues 26 to 577 (QSPTPSPTGL…LHHSTSYNSK (552 aa)). Residues 28–163 (PTPSPTGLTT…TASTFPTDPV (136 aa)) form a disordered region. Composition is skewed to polar residues over residues 52-61 (THTTAFSPAS) and 70-131 (SETT…SGSA). N80, N92, N97, N186, N192, N199, N234, N262, N272, and N278 each carry an N-linked (GlcNAc...) asparagine glycan. A glycan (N-linked (GlcNAc...) asparagine; atypical) is linked at N286. N-linked (GlcNAc...) asparagine glycosylation is found at N337, N380, N421, N470, N490, and N531. 2 consecutive Fibronectin type-III domains span residues 391–483 (SPGE…TKSA) and 484–576 (PPSQ…SYNS). A helical membrane pass occupies residues 578 to 598 (ALIAFLAFLIIVTSIALLVVL). The Cytoplasmic portion of the chain corresponds to 599-1306 (YKIYDLHKKR…PASPALNQGS (708 aa)). Tyrosine-protein phosphatase domains follow at residues 653–912 (FLAE…LVEY) and 944–1228 (LEAE…IAST). Y683 is modified (phosphotyrosine). Residues D821, 853-859 (CSAGVGR), and Q897 each bind substrate. C853 serves as the catalytic Phosphocysteine intermediate. S975, S994, S997, S1001, S1004, S1005, and S1009 each carry phosphoserine. The interval 993–1014 (MSKESEHDSDESSDDDSDSEEP) is disordered. Positions 999–1012 (HDSDESSDDDSDSE) are enriched in acidic residues. C1169 (phosphocysteine intermediate) is an active-site residue. The tract at residues 1261 to 1306 (CVNPLGAPEKLPEAKEQAEGSEPTSGTEGPEHSVNGPASPALNQGS) is disordered. S1299 is modified (phosphoserine).

This sequence belongs to the protein-tyrosine phosphatase family. Receptor class 1/6 subfamily. In terms of assembly, binds GANAB and PRKCSH. Interacts with SKAP1. Interacts with DPP4; the interaction is enhanced in an interleukin-12-dependent manner in activated lymphocytes. Interacts with CD53; this interaction stabilizes PTPRC on the membrane and is required for optimal phosphatase activity. Interacts with CLEC10A. As to quaternary structure, does not interact with CLEC10A. In terms of assembly, (Microbial infection) Interacts with human cytomegalovirus protein UL11; the interaction is required for binding of UL11 to T-cells. In terms of processing, heavily N- and O-glycosylated. As to expression, isoform 1: Detected in thymocytes. Isoform 2: Detected in thymocytes. Isoform 3: Detected in thymocytes. Isoform 4: Not detected in thymocytes. Isoform 5: Detected in thymocytes. Isoform 6: Not detected in thymocytes. Isoform 7: Detected in thymocytes. Isoform 8: Not detected in thymocytes.

It localises to the cell membrane. Its subcellular location is the membrane raft. The protein resides in the synapse. The catalysed reaction is O-phospho-L-tyrosyl-[protein] + H2O = L-tyrosyl-[protein] + phosphate. Its function is as follows. Protein tyrosine-protein phosphatase required for T-cell activation through the antigen receptor. Acts as a positive regulator of T-cell coactivation upon binding to DPP4. The first PTPase domain has enzymatic activity, while the second one seems to affect the substrate specificity of the first one. Upon T-cell activation, recruits and dephosphorylates SKAP1 and FYN. Dephosphorylates LYN, and thereby modulates LYN activity. Interacts with CLEC10A at antigen presenting cell-T cell contact; CLEC10A on immature dendritic cells recognizes Tn antigen-carrying PTPRC/CD45 receptor on effector T cells and modulates T cell activation threshold to limit autoreactivity. In terms of biological role, (Microbial infection) Acts as a receptor for human cytomegalovirus protein UL11 and mediates binding of UL11 to T-cells, leading to reduced induction of tyrosine phosphorylation of multiple signaling proteins upon T-cell receptor stimulation and impaired T-cell proliferation. The polypeptide is Receptor-type tyrosine-protein phosphatase C (Homo sapiens (Human)).